The primary structure comprises 282 residues: 2-dehydro-3-deoxyphosphooctonate aldolase (282 aa).

The protein belongs to the KdsA family.

It localises to the cytoplasm. It carries out the reaction D-arabinose 5-phosphate + phosphoenolpyruvate + H2O = 3-deoxy-alpha-D-manno-2-octulosonate-8-phosphate + phosphate. Its pathway is carbohydrate biosynthesis; 3-deoxy-D-manno-octulosonate biosynthesis; 3-deoxy-D-manno-octulosonate from D-ribulose 5-phosphate: step 2/3. It functions in the pathway bacterial outer membrane biogenesis; lipopolysaccharide biosynthesis. In Shewanella baltica (strain OS185), this protein is 2-dehydro-3-deoxyphosphooctonate aldolase.